We begin with the raw amino-acid sequence, 394 residues long: MTQLFDTLGFIEASAVRAGAGADAVAHEEAVTPVGGAAVSLEQVGKVFATPRGQAAALRDVTLDVRRGEVFGIIGRSGAGKSTLLRLLNGLERPSSGRVRVQGVDVGALDEDGLVALRRRTGMVFQHFNLLSAKTVFENVALPLKIAGVPKAERVRKVEALLELVGLAAKRDAYPASLSGGQKQRVGIARALVHDPEVLLCDEATSALDPETTQSILALLADINRRLGLTIVLITHEMEVIRAVCDTVAVIEQGEVVETGPVWRVFGDPRHGATRALLSTLQHDLPAELAARVRPLPEQAALPDGAQIVLDVRYTGESGGEPDVGALAAALGGSVRFLHGGIESIQGHAQGRLVIAATPRADDAGPSTARGGAVAALLERARRHANHAEVLGYV.

In terms of domain architecture, ABC transporter spans 39–278 (VSLEQVGKVF…PRHGATRALL (240 aa)). 75-82 (GRSGAGKS) lines the ATP pocket.

The protein belongs to the ABC transporter superfamily. Methionine importer (TC 3.A.1.24) family. As to quaternary structure, the complex is composed of two ATP-binding proteins (MetN), two transmembrane proteins (MetI) and a solute-binding protein (MetQ).

It is found in the cell inner membrane. It catalyses the reaction L-methionine(out) + ATP + H2O = L-methionine(in) + ADP + phosphate + H(+). The catalysed reaction is D-methionine(out) + ATP + H2O = D-methionine(in) + ADP + phosphate + H(+). Part of the ABC transporter complex MetNIQ involved in methionine import. Responsible for energy coupling to the transport system. This chain is Methionine import ATP-binding protein MetN 2, found in Burkholderia cenocepacia (strain HI2424).